The sequence spans 436 residues: MAKIVKVIGREIIDSRGNPTVEAEVHLXGGFVGLAAAPSGASTGSREALELRDGDKSRFLGKGVLKAVAAVNNEIAQAIVGKDATNQAEIDQIMIDLDGTENKSNFGANAILAVSLANAKAAAASKGLPLYAYIAELNGTAGVYSMPLPMMNIINGGEHADNNVDIQEFMIQPVGAKTLREALRIGAEVFHNLAKVLKAKGMSTAVGDEGGFAPNLASNADALACIKEAVEKAGYVLGKDVTLAMDCASSEFYNKENGMYEMKGEGKSFTSQEFTHYLEELCKEYPIVSIEDGQDESDWEGFAYQTKVLGDRVQLVGDDLFVTNTKILKEGIEKGIANSILIKFNQIGSLTETLAAIKMAKDAGYTAVISHRSGETEDATIADLAVGTAAGQIKTGSMSRSDRIAKYNQLIRIEEALERAGTPAAFPGLKAVKGQA.

Gln167 is a binding site for (2R)-2-phosphoglycerate. The active-site Proton donor is Glu209. Residues Asp246, Glu291, and Asp318 each contribute to the Mg(2+) site. The (2R)-2-phosphoglycerate site is built by Lys343, Arg372, Ser373, and Lys394. Residue Lys343 is the Proton acceptor of the active site.

This sequence belongs to the enolase family. Component of the RNA degradosome, a multiprotein complex involved in RNA processing and mRNA degradation. The cofactor is Mg(2+).

The protein resides in the cytoplasm. It localises to the secreted. Its subcellular location is the cell surface. It carries out the reaction (2R)-2-phosphoglycerate = phosphoenolpyruvate + H2O. Its pathway is carbohydrate degradation; glycolysis; pyruvate from D-glyceraldehyde 3-phosphate: step 4/5. Its function is as follows. Catalyzes the reversible conversion of 2-phosphoglycerate (2-PG) into phosphoenolpyruvate (PEP). It is essential for the degradation of carbohydrates via glycolysis. The polypeptide is Enolase (Haemophilus influenzae (strain ATCC 51907 / DSM 11121 / KW20 / Rd)).